The primary structure comprises 3619 residues: BEACH domain-containing protein lvsA (3619 aa).

Disordered stretches follow at residues 1–117, 648–709, 1101–1129, 1367–1390, 1636–1658, 1893–1924, and 1964–1999; these read MFRR…NNNN, KIDD…EKEA, NNNNNNSSNNSNNSNNSNNNNNNNNNNDQ, SPNLTGLQNNNNNNNNSGGSNSKK, IPTPSSSSSSSSTSSTSSRRKSI, SSISSNISSSSSSSTLVNSSNSNNNNNTPTSG, and QQAALKKKNRMSIQSSPFQSKNLGTGGDDSVTNTPN. Residues 17 to 30 are compositionally biased toward pro residues; that stretch reads PQVPHSPGHPPHQP. Composition is skewed to low complexity over residues 31-59, 68-87, 97-117, 656-689, 1101-1127, 1375-1387, 1640-1652, and 1893-1923; these read PQQQQQQQQQQQQQQQQQQQQQQQQQQPQ, SVSSPIGSTTSSNSTSSFSS, EESSSINSNNNNNNNKNNNNN, NNNNNNNNNNNNNNNNNNNDNDNNNNNDNNNEEN, NNNNNNSSNNSNNSNNSNNNNNNNNNN, NNNNNNNNSGGSN, SSSSSSSSTSSTS, and SSISSNISSSSSSSTLVNSSNSNNNNNTPTS. Residues 94–133 form a WD 1 repeat; that stretch reads SATEESSSINSNNNNNNNKNNNNNNNSNIIESNINVWTIM. Positions 1974–1986 are enriched in polar residues; sequence MSIQSSPFQSKNL. Positions 2234 to 2258 form a coiled coil; the sequence is VKILEKLEADRVGLQKTVQSLYKSL. One copy of the WD 2 repeat lies at 2294–2335; the sequence is LDSDFMNAFCYPLYKLVISDQHEHVDNSIKLWRLLLSLKTSS. Disordered regions lie at residues 2403–2457 and 2596–2785; these read KKQH…ITKK and NTSS…SEDE. Basic and acidic residues predominate over residues 2440-2452; it reads DRKDQSHQEEKSK. A compositionally biased stretch (low complexity) spans 2596 to 2662; sequence NTSSITNNNN…TTTPQQSSSQ (67 aa). Composition is skewed to polar residues over residues 2663–2687 and 2694–2725; these read IKVSSPELSSNEITPPTSPVQSSSE and KLQSSTVEGQLSRNPSSSELFNDNSSTISEEN. Low complexity-rich tracts occupy residues 2726–2735 and 2742–2764; these read SSLTSASTTL and TQTTTTTTTSTPTTQSSVATTTT. A BEACH-type PH domain is found at 2807-2932; that stretch reads KDPRLNGIMY…TRDEVYHTLV (126 aa). The tract at residues 2940–2971 is disordered; that stretch reads TIGGDAQGITGGQTGNDDNDDHHGGGGGRGVR. A compositionally biased stretch (gly residues) spans 2944–2953; it reads DAQGITGGQT. The span at 2959-2971 shows a compositional bias: basic and acidic residues; it reads DDHHGGGGGRGVR. A BEACH domain is found at 2972 to 3270; it reads DRFTSIWRKS…QLFDKPHPKR (299 aa). 5 WD repeats span residues 3347–3386, 3389–3428, 3431–3471, 3474–3518, and 3563–3602; these read HHDGPLTCLTATEDGRICVSGGSDSLICVYNLKRFSLAKR, GHTGSITCVSASRPYSIIVSGSDDRTCIIWDLNRLCYVRS, AHEG…NYKT, IAND…LPDN, and SHSTAITSIFLTNDQQKFYTGDITGRVCMWSDNEASQVKQ. Residues 3516–3539 are disordered; it reads PDNNNSNNNNNNNNNNNNNATQIP. A compositionally biased stretch (low complexity) spans 3518–3534; it reads NNNSNNNNNNNNNNNNN.

The protein localises to the contractile vacuole membrane. In terms of biological role, involved in myosin-independent cytokinesis and early steps of phagocytosis. Also involved in contractile vacuole-mediated osmoregulation. The protein is BEACH domain-containing protein lvsA (lvsA) of Dictyostelium discoideum (Social amoeba).